A 227-amino-acid chain; its full sequence is Zinc finger protein ZAT10 (227 aa).

The segment at 80–102 (YKCSVCDKTFSSYQALGGHKASH) adopts a C2H2-type 1 zinc-finger fold. The interval 96-128 (GGHKASHRKNLSQTLSGGGDDHSTSSATTTSAV) is disordered. Low complexity predominate over residues 119 to 128 (TSSATTTSAV). The segment at 136–158 (HVCTICNKSFPSGQALGGHKRCH) adopts a C2H2-type 2 zinc-finger fold. A disordered region spans residues 168–189 (SSVSNSEGAGSTSHVSSSHRGF). Positions 174–186 (EGAGSTSHVSSSH) are enriched in polar residues.

In terms of tissue distribution, expressed in roots, stems and leaves.

It is found in the nucleus. In terms of biological role, transcriptional repressor involved in abiotic stress responses. Can repress the stress responsive genes DREB1A and LTI78. Probably involved in jasmonate (JA) early signaling response. May regulate the expression of the JA biosynthesis gene LOX3 and control the expression of TIFY10A/JAZ1, a key repressor in the JA signaling cascade. The polypeptide is Zinc finger protein ZAT10 (ZAT10) (Arabidopsis thaliana (Mouse-ear cress)).